We begin with the raw amino-acid sequence, 72 residues long: UPF0352 protein Patl_3379 (72 aa).

Belongs to the UPF0352 family.

In Pseudoalteromonas atlantica (strain T6c / ATCC BAA-1087), this protein is UPF0352 protein Patl_3379.